A 167-amino-acid chain; its full sequence is Crossover junction endodeoxyribonuclease RuvC (167 aa).

Residues D7, E67, and D140 contribute to the active site. Mg(2+)-binding residues include D7, E67, and D140.

This sequence belongs to the RuvC family. In terms of assembly, homodimer which binds Holliday junction (HJ) DNA. The HJ becomes 2-fold symmetrical on binding to RuvC with unstacked arms; it has a different conformation from HJ DNA in complex with RuvA. In the full resolvosome a probable DNA-RuvA(4)-RuvB(12)-RuvC(2) complex forms which resolves the HJ. It depends on Mg(2+) as a cofactor.

The protein resides in the cytoplasm. The catalysed reaction is Endonucleolytic cleavage at a junction such as a reciprocal single-stranded crossover between two homologous DNA duplexes (Holliday junction).. Its function is as follows. The RuvA-RuvB-RuvC complex processes Holliday junction (HJ) DNA during genetic recombination and DNA repair. Endonuclease that resolves HJ intermediates. Cleaves cruciform DNA by making single-stranded nicks across the HJ at symmetrical positions within the homologous arms, yielding a 5'-phosphate and a 3'-hydroxyl group; requires a central core of homology in the junction. The consensus cleavage sequence is 5'-(A/T)TT(C/G)-3'. Cleavage occurs on the 3'-side of the TT dinucleotide at the point of strand exchange. HJ branch migration catalyzed by RuvA-RuvB allows RuvC to scan DNA until it finds its consensus sequence, where it cleaves and resolves the cruciform DNA. This chain is Crossover junction endodeoxyribonuclease RuvC, found in Dehalococcoides mccartyi (strain ATCC BAA-2100 / JCM 16839 / KCTC 5957 / BAV1).